The chain runs to 426 residues: Vacuole membrane protein hfl11 (426 aa).

A run of 5 helical transmembrane segments spans residues 39 to 59, 73 to 93, 133 to 153, 172 to 192, and 223 to 243; these read SVVR…LSVY, IYEA…LGGE, GILQ…LTKV, IGLV…TFWV, and VLSI…YSLL. Ser364 carries the phosphoserine modification. Positions 386–409 are ATG8-interacting region; sequence LQFEIDDEMEPLYNQAKQMRYGDY.

The protein belongs to the TMEM184 family. As to quaternary structure, interacts with atg8.

Its subcellular location is the vacuole membrane. Its function is as follows. Vacuole membrane protein that recruits ATG8 to facilitate the degradation of vacuolar integral membrane proteins during early-stationary vacuole turnover (EVT) when cells enter stationary phase. The polypeptide is Vacuole membrane protein hfl11 (Schizosaccharomyces pombe (strain 972 / ATCC 24843) (Fission yeast)).